Reading from the N-terminus, the 636-residue chain is DNA-dependent metalloprotease SPRTN (636 aa).

Residues 19 to 42 form a disordered region; the sequence is QETPAAGWPDEDCPSSKRRRVDPS. One can recognise a SprT-like domain in the interval 76–183; the sequence is RAMFLQFNDK…ASGTNITIYH (108 aa). Histidine 141 is a binding site for Zn(2+). The active site involves glutamate 142. Positions 145 and 160 each coordinate Zn(2+). 2 disordered regions span residues 238–382 and 398–430; these read TYTK…GKQR and RGASAVGSSKSSTDASTADYRSNSALDAKPSGK. Residues 241–268 are compositionally biased toward basic and acidic residues; the sequence is KIKEPENYGKTGKSDKQRDKMPATEMPK. Residues 272 to 281 are compositionally biased toward low complexity; that stretch reads PPSSTSSSGS. The SHP-box motif lies at 290 to 298; the sequence is FSGRGFVLG. Over residues 302–311 the composition is skewed to polar residues; sequence QIPTNKQIQS. Pro residues predominate over residues 313-327; the sequence is PKAPPEPLHSPPDSP. The span at 341–374 shows a compositional bias: polar residues; sequence RLSSGTSNIPRKRSVGNTNAFINVNGSPVRISNG. Residues 399 to 416 show a composition bias toward low complexity; it reads GASAVGSSKSSTDASTAD. The short motif at 451–458 is the PIP-box element; sequence ESNISKYF. The segment at 473 to 608 is disordered; the sequence is TFGSPQKSAI…VRDQQANNPP (136 aa). Composition is skewed to polar residues over residues 492–523 and 545–554; these read FGSNQRPDSTSSGIRNTGSPQRSHASATSGSS and SPRTSGTTPS. A Nuclear localization signal motif is present at residues 535–566; that stretch reads SNFPSPRNIGSPRTSGTTPSGAKKRSWEEHNS. 2 stretches are compositionally biased toward basic and acidic residues: residues 559–570 and 584–593; these read RSWEEHNSERVF and TDKKREEVRS. The UBZ4-type zinc-finger motif lies at 612 to 636; the sequence is TVHCPVCHIRLPESTINDHLDSCLL. Zn(2+) contacts are provided by cysteine 615, cysteine 618, histidine 630, and cysteine 634.

The protein belongs to the Spartan family. As to quaternary structure, homodimer. Zn(2+) is required as a cofactor. Autocatalytically cleaved in response to double-stranded DNA-binding: autocatalytic cleavage takes place in trans and leads to inactivation.

Its subcellular location is the nucleus. It is found in the chromosome. Its activity is regulated as follows. DNA-binding activates the protease activity: single-stranded DNA-binding specifically activates ability to cleave covalent DNA-protein cross-links (DPCs). In contrast, double-stranded DNA-binding specifically activates autocatalytic cleavage, and subsequent inactivation. DNA-dependent metalloendopeptidase that mediates the proteolytic cleavage of covalent DNA-protein cross-links (DPCs) during DNA synthesis, thereby playing a key role in maintaining genomic integrity. DPCs are highly toxic DNA lesions that interfere with essential chromatin transactions, such as replication and transcription, and which are induced by reactive agents, such as UV light or formaldehyde. Associates with the DNA replication machinery and specifically removes DPCs during DNA synthesis. Catalyzes proteolytic cleavage of the hmces DNA-protein cross-link following unfolding by the brip1/fancj helicase. Acts as a pleiotropic protease for DNA-binding proteins cross-linked with DNA, such as top1, top2a, histones H3 and H4. Mediates degradation of DPCs that are not ubiquitinated, while it is not able to degrade ubiquitinated DPCs. SPRTN activation requires polymerase collision with DPCs followed by helicase bypass of DPCs. May also act as a 'reader' of ubiquitinated pcna: facilitates chromatin association of rad18 and is required for efficient pcna monoubiquitination, promoting a feed-forward loop to enhance pcna ubiquitination and translesion DNA synthesis. Acts as a regulator of translesion DNA synthesis by recruiting vcp/p97 to sites of DNA damage. The chain is DNA-dependent metalloprotease SPRTN from Danio rerio (Zebrafish).